The following is a 911-amino-acid chain: General transcription factor 3C polypeptide 2 (911 aa).

Disordered regions lie at residues 34–187 (LDVK…RRRA) and 205–297 (ALPA…MAPN). Residues 35–46 (DVKTSSEMTSAE) show a composition bias toward polar residues. Residue Ser63 is modified to Phosphoserine. Over residues 64 to 81 (PDQRRLPPEQESLSRLEQ) the composition is skewed to basic and acidic residues. Over residues 92–112 (SKPRASKPGRKRGGRTRKGPK) the composition is skewed to basic residues. Pro residues predominate over residues 114 to 123 (PQQPNPPSAP). Phosphoserine occurs at positions 132, 165, 167, 220, and 260. Residues 253 to 262 (EAEDVEESEG) are compositionally biased toward acidic residues. Residues 263 to 275 (PSESSSEPEPAVP) are compositionally biased toward low complexity. 2 WD repeats span residues 465-521 (CDNG…ALLA) and 552-593 (SECG…PLQR). A Phosphoserine modification is found at Ser597. Residues 611–651 (AHDQAVRTLQWCKANSHFLASAGSDRKIKFWDLRRPYEPIN) form a WD 3 repeat. A disordered region spans residues 765–785 (SPEGPDHSSASSGVPNPPKAR). A WD 4 repeat occupies 832 to 874 (LQLEAIHKVRFSPNLDSYGWLVSGGQSGLVRIHFVRGLASPLG). 3 positions are modified to phosphoserine: Ser871, Ser892, and Ser893. The disordered stretch occupies residues 889-911 (FQPSSPTRRPGFSPTSHRLLPTP). Thr895 carries the post-translational modification Phosphothreonine. A Phosphoserine modification is found at Ser901.

In terms of assembly, part of the TFIIIC subcomplex TFIIIC2, consisting of six subunits, GTF3C1, GTF3C2, GTF3C3, GTF3C4, GTF3C5 and GTF3C6.

It is found in the nucleus. Its function is as follows. Required for RNA polymerase III-mediated transcription. Component of TFIIIC that initiates transcription complex assembly on tRNA and is required for transcription of 5S rRNA and other stable nuclear and cytoplasmic RNAs. May play a direct role in stabilizing interactions of TFIIIC2 with TFIIIC1. The polypeptide is General transcription factor 3C polypeptide 2 (GTF3C2) (Pongo abelii (Sumatran orangutan)).